Reading from the N-terminus, the 752-residue chain is Zinc finger BED domain-containing protein RICESLEEPER 3 (752 aa).

The segment at 106–166 adopts a BED-type zinc-finger fold; that stretch reads RKKSVVWEHF…ASCPMLKNED (61 aa). Zn(2+) contacts are provided by Cys129, Cys132, His153, and Cys159. Residues 647–733 are HATC (Hobo-Ac-Tam3) domain; that stretch reads ELEQYLEEAL…EALFCAKDWL (87 aa).

As to quaternary structure, homodimer.

It localises to the nucleus. In terms of biological role, transposase-like protein that is essential for plant growth and development. May regulate global gene expression by recruiting other cellular factors. The protein is Zinc finger BED domain-containing protein RICESLEEPER 3 of Oryza sativa subsp. japonica (Rice).